Here is a 60-residue protein sequence, read N- to C-terminus: Metallothionein A (60 aa).

Residues 1–28 form a beta region; it reads MDPCDCSKSGTCNCGGSCTCTNCSCKSC. A divalent metal cation is bound by residues Cys4, Cys6, Cys12, Cys14, Cys18, Cys20, Cys23, Cys25, Cys28, Cys32, Cys33, Cys35, Cys36, Cys40, Cys43, Cys47, Cys49, Cys54, Cys58, and Cys59. Positions 29 to 60 are alpha; the sequence is KKSCCPCCPSGCTKCASGCVCKGKTCDTSCCQ.

The protein belongs to the metallothionein superfamily. Type 1 family.

Its function is as follows. Metallothioneins have a high content of cysteine residues that bind various heavy metals. In Chionodraco hamatus (Antarctic teleost icefish), this protein is Metallothionein A (mta).